We begin with the raw amino-acid sequence, 255 residues long: Complement C1q-like protein 3 (255 aa).

The N-terminal stretch at 1-20 is a signal peptide; that stretch reads MVLLLVILIPVLVSSAGTSA. A disordered region spans residues 39–109; sequence KAPSTAATPD…GLPGPPGAPG (71 aa). In terms of domain architecture, Collagen-like spans 61 to 111; the sequence is GPKGEAGRPGKAGPRGPPGEPGPPGPVGPPGEKGEPGRQGLPGPPGAPGLN. Pro residues predominate over residues 75 to 89; it reads RGPPGEPGPPGPVGP. The C1q domain maps to 122-255; the sequence is STVPKIAFYA…TFSGFIIYAD (134 aa).

Forms homooligomers. Interacts with ADGRB3. Forms heterooligomers with C1QL2 and C1QL4, when proteins are coexpressed; this interaction does not occur after secretion. Highly expressed in brain and white adipose tissue. In gonadal fat pad, expressed at lower levels in adipocytes than in the stromal vascular fraction (VSP), which contains preadipocytes, fibroblasts, endothelial cells and occasional immune cells. Expression exhibits sexually dimorphism, with higher levels in females than in males (at protein level). Tends to be up-regulated in adipose tissue from obese males, but not females. Expressed in glial cells.

The protein resides in the secreted. In terms of biological role, may regulate the number of excitatory synapses that are formed on hippocampus neurons. Has no effect on inhibitory synapses. Plays a role in glucose homeostasis. Via AMPK signaling pathway, stimulates glucose uptake in adipocytes, myotubes and hepatocytes and enhances insulin-stimulated glucose uptake. In a hepatoma cell line, reduces the expression of gluconeogenic enzymes G6PC1 and PCK1 and hence decreases de novo glucose production. This is Complement C1q-like protein 3 (C1ql3) from Mus musculus (Mouse).